Consider the following 90-residue polypeptide: Probable Fe(2+)-trafficking protein (90 aa).

The protein belongs to the Fe(2+)-trafficking protein family.

In terms of biological role, could be a mediator in iron transactions between iron acquisition and iron-requiring processes, such as synthesis and/or repair of Fe-S clusters in biosynthetic enzymes. The chain is Probable Fe(2+)-trafficking protein from Vibrio atlanticus (strain LGP32) (Vibrio splendidus (strain Mel32)).